The following is a 216-amino-acid chain: Large ribosomal subunit protein uL3 (216 aa).

Positions 119-143 (GYQGNIHKDGQSRGPMAHGSRYHRR) are disordered.

Belongs to the universal ribosomal protein uL3 family. As to quaternary structure, part of the 50S ribosomal subunit. Forms a cluster with proteins L14 and L19.

Functionally, one of the primary rRNA binding proteins, it binds directly near the 3'-end of the 23S rRNA, where it nucleates assembly of the 50S subunit. The polypeptide is Large ribosomal subunit protein uL3 (Levilactobacillus brevis (strain ATCC 367 / BCRC 12310 / CIP 105137 / JCM 1170 / LMG 11437 / NCIMB 947 / NCTC 947) (Lactobacillus brevis)).